Consider the following 339-residue polypeptide: MDRVNSSGHVISVSPSLTNSTGVPTPAPKAIIAAALFMSFIVGTISNGLYLWMLKFKMQRTVNTLLFFHLILSYFISTLILPFMATSFLQDNHWAFGSVLCKVFNSTLSVSMFASVFFLSAISVDRYHLTLHPVWSQQHRTPRWASRIALRIWILATILSIPYLVFRETHDDHKGRIKCQNNYIVGTNWESSEHQTLGQWIHAACFGRRFLLGFLLPFLVIVFCYKRVATKMKDKGLFKSSKPFKVMLTAVVSFFVCWMPYHVHSGLVLTKSQPLPSQLTLGLAVVTISFNTVVSPILYLFTGENFEVFKKSILALFKSTFSDSSATERTQTLNSETEI.

The Extracellular segment spans residues 1–30 (MDRVNSSGHVISVSPSLTNSTGVPTPAPKA). N-linked (GlcNAc...) asparagine glycosylation is found at asparagine 5 and asparagine 19. Residues 31–53 (IIAAALFMSFIVGTISNGLYLWM) form a helical membrane-spanning segment. The Cytoplasmic portion of the chain corresponds to 54–64 (LKFKMQRTVNT). Residues 65-86 (LLFFHLILSYFISTLILPFMAT) form a helical membrane-spanning segment. Residues 87 to 103 (SFLQDNHWAFGSVLCKV) are Extracellular-facing. A disulfide bridge connects residues cysteine 101 and cysteine 179. The chain crosses the membrane as a helical span at residues 104–124 (FNSTLSVSMFASVFFLSAISV). Residues 125 to 143 (DRYHLTLHPVWSQQHRTPR) are Cytoplasmic-facing. The helical transmembrane segment at 144–165 (WASRIALRIWILATILSIPYLV) threads the bilayer. Over 166–209 (FRETHDDHKGRIKCQNNYIVGTNWESSEHQTLGQWIHAACFGRR) the chain is Extracellular. Residues 210 to 230 (FLLGFLLPFLVIVFCYKRVAT) traverse the membrane as a helical segment. Residues 231-246 (KMKDKGLFKSSKPFKV) are Cytoplasmic-facing. Residues 247–268 (MLTAVVSFFVCWMPYHVHSGLV) traverse the membrane as a helical segment. The Extracellular segment spans residues 269–283 (LTKSQPLPSQLTLGL). The chain crosses the membrane as a helical span at residues 284 to 303 (AVVTISFNTVVSPILYLFTG). The Cytoplasmic segment spans residues 304–339 (ENFEVFKKSILALFKSTFSDSSATERTQTLNSETEI).

The protein belongs to the G-protein coupled receptor 1 family.

It localises to the cell membrane. Functionally, orphan receptor; could be a chemoattractant receptor. The chain is Probable G-protein coupled receptor 33 (Gpr33) from Rattus rattus (Black rat).